We begin with the raw amino-acid sequence, 174 residues long: 3-hydroxyanthranilate 3,4-dioxygenase (174 aa).

An O2-binding site is contributed by R47. Fe cation contacts are provided by H51, E57, and H95. Residue E57 coordinates substrate. The substrate site is built by R99 and E110. 4 residues coordinate Fe cation: C125, C128, C162, and C165.

Belongs to the 3-HAO family. Homodimer. It depends on Fe(2+) as a cofactor.

It catalyses the reaction 3-hydroxyanthranilate + O2 = (2Z,4Z)-2-amino-3-carboxymuconate 6-semialdehyde. It functions in the pathway cofactor biosynthesis; NAD(+) biosynthesis; quinolinate from L-kynurenine: step 3/3. In terms of biological role, catalyzes the oxidative ring opening of 3-hydroxyanthranilate to 2-amino-3-carboxymuconate semialdehyde, which spontaneously cyclizes to quinolinate. The chain is 3-hydroxyanthranilate 3,4-dioxygenase from Burkholderia lata (strain ATCC 17760 / DSM 23089 / LMG 22485 / NCIMB 9086 / R18194 / 383).